The chain runs to 572 residues: Proline--tRNA ligase (572 aa).

Belongs to the class-II aminoacyl-tRNA synthetase family. ProS type 1 subfamily. As to quaternary structure, homodimer.

It localises to the cytoplasm. It carries out the reaction tRNA(Pro) + L-proline + ATP = L-prolyl-tRNA(Pro) + AMP + diphosphate. In terms of biological role, catalyzes the attachment of proline to tRNA(Pro) in a two-step reaction: proline is first activated by ATP to form Pro-AMP and then transferred to the acceptor end of tRNA(Pro). As ProRS can inadvertently accommodate and process non-cognate amino acids such as alanine and cysteine, to avoid such errors it has two additional distinct editing activities against alanine. One activity is designated as 'pretransfer' editing and involves the tRNA(Pro)-independent hydrolysis of activated Ala-AMP. The other activity is designated 'posttransfer' editing and involves deacylation of mischarged Ala-tRNA(Pro). The misacylated Cys-tRNA(Pro) is not edited by ProRS. This chain is Proline--tRNA ligase, found in Enterococcus faecalis (strain ATCC 700802 / V583).